A 64-amino-acid chain; its full sequence is Large ribosomal subunit protein bL28 (64 aa).

Residues 1-23 (MARKDQISHRGPLSGNNRSHALN) form a disordered region.

It belongs to the bacterial ribosomal protein bL28 family.

This is Large ribosomal subunit protein bL28 from Mesomycoplasma hyopneumoniae (strain J / ATCC 25934 / NCTC 10110) (Mycoplasma hyopneumoniae).